The sequence spans 143 residues: Nucleoside diphosphate kinase (143 aa).

Residues lysine 11, phenylalanine 59, arginine 87, threonine 93, arginine 104, and asparagine 114 each coordinate ATP. Histidine 117 acts as the Pros-phosphohistidine intermediate in catalysis.

This sequence belongs to the NDK family. As to quaternary structure, homotetramer. Requires Mg(2+) as cofactor.

It is found in the cytoplasm. It catalyses the reaction a 2'-deoxyribonucleoside 5'-diphosphate + ATP = a 2'-deoxyribonucleoside 5'-triphosphate + ADP. The catalysed reaction is a ribonucleoside 5'-diphosphate + ATP = a ribonucleoside 5'-triphosphate + ADP. Major role in the synthesis of nucleoside triphosphates other than ATP. The ATP gamma phosphate is transferred to the NDP beta phosphate via a ping-pong mechanism, using a phosphorylated active-site intermediate. The polypeptide is Nucleoside diphosphate kinase (Salmonella arizonae (strain ATCC BAA-731 / CDC346-86 / RSK2980)).